The sequence spans 282 residues: Bifunctional protein FolD (282 aa).

NADP(+)-binding positions include 165 to 167 and serine 190; that span reads GRS.

The protein belongs to the tetrahydrofolate dehydrogenase/cyclohydrolase family. Homodimer.

It catalyses the reaction (6R)-5,10-methylene-5,6,7,8-tetrahydrofolate + NADP(+) = (6R)-5,10-methenyltetrahydrofolate + NADPH. The catalysed reaction is (6R)-5,10-methenyltetrahydrofolate + H2O = (6R)-10-formyltetrahydrofolate + H(+). It participates in one-carbon metabolism; tetrahydrofolate interconversion. Catalyzes the oxidation of 5,10-methylenetetrahydrofolate to 5,10-methenyltetrahydrofolate and then the hydrolysis of 5,10-methenyltetrahydrofolate to 10-formyltetrahydrofolate. The sequence is that of Bifunctional protein FolD from Acinetobacter baumannii (strain ATCC 17978 / DSM 105126 / CIP 53.77 / LMG 1025 / NCDC KC755 / 5377).